Here is a 575-residue protein sequence, read N- to C-terminus: Cytoskeleton-associated protein 4 (575 aa).

Residues 1–73 (MPSAKQRGSK…RGRSSAATAN (73 aa)) are disordered. At 1 to 85 (MPSAKQRGSK…SASCSRRLGR (85 aa)) the chain is on the cytoplasmic side. A phosphoserine mark is found at Ser3, Ser17, and Ser19. An N6-acetyllysine modification is found at Lys21. Residues 37–53 (PAAPQQPQPPAPHPPQH) show a composition bias toward pro residues. Cys79 carries the S-palmitoyl cysteine; by ZDHHC2 lipid modification. The helical transmembrane segment at 86–108 (VLNFLFYLSLVAAAAFSGWYVHH) threads the bilayer. Over 109-575 (VLEEVQQVRR…LKVEKIHEKI (467 aa)) the chain is Extracellular. Positions 125–193 (RQRDELGQGL…QKLQNEILKD (69 aa)) form a coiled coil. Residues Ser211, Ser292, and Ser367 each carry the phosphoserine modification. Coiled-coil stretches lie at residues 236–438 (DVQK…VGNL) and 507–575 (SSLD…HEKI).

As to quaternary structure, interacts with REEP5. Reversibly palmitoylated. Palmitoylation at Cys-79 by DHHC2 is required for its trafficking from the ER to the plasma membrane and for its perinuclear localization. Post-translationally, increased phosphorylation during mitosis prevents binding to microtubules. As to expression, expressed in cardiomyocytes (at protein level).

It is found in the endoplasmic reticulum membrane. It localises to the cell membrane. The protein localises to the cytoplasm. Its subcellular location is the cytoskeleton. The protein resides in the perinuclear region. High-affinity epithelial cell surface receptor for APF. In terms of biological role, mediates the anchoring of the endoplasmic reticulum to microtubules. This Mus musculus (Mouse) protein is Cytoskeleton-associated protein 4 (Ckap4).